Here is a 356-residue protein sequence, read N- to C-terminus: Ferrochelatase (356 aa).

H214 and E295 together coordinate Fe cation.

It belongs to the ferrochelatase family.

It is found in the cytoplasm. The enzyme catalyses heme b + 2 H(+) = protoporphyrin IX + Fe(2+). It functions in the pathway porphyrin-containing compound metabolism; protoheme biosynthesis; protoheme from protoporphyrin-IX: step 1/1. In terms of biological role, catalyzes the ferrous insertion into protoporphyrin IX. This is Ferrochelatase from Paraburkholderia phymatum (strain DSM 17167 / CIP 108236 / LMG 21445 / STM815) (Burkholderia phymatum).